Reading from the N-terminus, the 432-residue chain is Adenylosuccinate synthetase (432 aa).

Residues 13 to 19 and 41 to 43 contribute to the GTP site; these read GDEGKGK and GHT. Aspartate 14 serves as the catalytic Proton acceptor. Mg(2+)-binding residues include aspartate 14 and glycine 41. IMP-binding positions include 14–17, 39–42, threonine 130, arginine 144, glutamine 225, threonine 240, and arginine 304; these read DEGK and NAGH. Histidine 42 functions as the Proton donor in the catalytic mechanism. 300 to 306 is a substrate binding site; the sequence is ATTGRRR. Residues arginine 306, 332–334, and 415–417 contribute to the GTP site; these read KLD and STG.

The protein belongs to the adenylosuccinate synthetase family. As to quaternary structure, homodimer. It depends on Mg(2+) as a cofactor.

Its subcellular location is the cytoplasm. It catalyses the reaction IMP + L-aspartate + GTP = N(6)-(1,2-dicarboxyethyl)-AMP + GDP + phosphate + 2 H(+). The protein operates within purine metabolism; AMP biosynthesis via de novo pathway; AMP from IMP: step 1/2. In terms of biological role, plays an important role in the de novo pathway of purine nucleotide biosynthesis. Catalyzes the first committed step in the biosynthesis of AMP from IMP. In Klebsiella pneumoniae subsp. pneumoniae (strain ATCC 700721 / MGH 78578), this protein is Adenylosuccinate synthetase.